The sequence spans 72 residues: Large ribosomal subunit protein bL31 (72 aa).

Zn(2+) is bound by residues Cys16, Cys18, Cys38, and Cys41.

The protein belongs to the bacterial ribosomal protein bL31 family. Type A subfamily. Part of the 50S ribosomal subunit. Zn(2+) is required as a cofactor.

In terms of biological role, binds the 23S rRNA. The sequence is that of Large ribosomal subunit protein bL31 from Azoarcus sp. (strain BH72).